We begin with the raw amino-acid sequence, 149 residues long: Transcriptional repressor NrdR (149 aa).

The segment at 3 to 34 (CPFCSATDTKVIDSRLVSDGHQVRRRRQCLAC) is a zinc-finger region. The 91-residue stretch at 49 to 139 (PKVIKSNGNR…VYRSFEDIKE (91 aa)) folds into the ATP-cone domain.

This sequence belongs to the NrdR family. Requires Zn(2+) as cofactor.

In terms of biological role, negatively regulates transcription of bacterial ribonucleotide reductase nrd genes and operons by binding to NrdR-boxes. The polypeptide is Transcriptional repressor NrdR (Aliivibrio fischeri (strain ATCC 700601 / ES114) (Vibrio fischeri)).